A 264-amino-acid chain; its full sequence is 3-methyl-2-oxobutanoate hydroxymethyltransferase (264 aa).

Residues Asp45 and Asp84 each coordinate Mg(2+). Residues 45 to 46 (DS), Asp84, and Lys112 contribute to the 3-methyl-2-oxobutanoate site. Glu114 is a Mg(2+) binding site. Residue Glu181 is the Proton acceptor of the active site.

It belongs to the PanB family. In terms of assembly, homodecamer; pentamer of dimers. Mg(2+) is required as a cofactor.

It localises to the cytoplasm. It catalyses the reaction 3-methyl-2-oxobutanoate + (6R)-5,10-methylene-5,6,7,8-tetrahydrofolate + H2O = 2-dehydropantoate + (6S)-5,6,7,8-tetrahydrofolate. It functions in the pathway cofactor biosynthesis; (R)-pantothenate biosynthesis; (R)-pantoate from 3-methyl-2-oxobutanoate: step 1/2. Functionally, catalyzes the reversible reaction in which hydroxymethyl group from 5,10-methylenetetrahydrofolate is transferred onto alpha-ketoisovalerate to form ketopantoate. This Photobacterium profundum (strain SS9) protein is 3-methyl-2-oxobutanoate hydroxymethyltransferase.